The primary structure comprises 394 residues: Serine palmitoyltransferase (394 aa).

Pyridoxal 5'-phosphate-binding positions include 111 to 112 (GF), S183, H211, and T239. An N6-(pyridoxal phosphate)lysine modification is found at K242.

Belongs to the class-II pyridoxal-phosphate-dependent aminotransferase family. It depends on pyridoxal 5'-phosphate as a cofactor.

It carries out the reaction L-serine + hexadecanoyl-CoA + H(+) = 3-oxosphinganine + CO2 + CoA. Its pathway is lipid metabolism; sphingolipid metabolism. Involved in de novo bacterial ceramide synthesis. Catalyzes the condensation of L-serine with palmitoyl-CoA (hexadecanoyl-CoA) to produce 3-oxosphinganine. Also capable of using alanine as substrate leading to the formation of 1-deoxysphinganine (1-deoxySa). Contributes to the levels of endogenous sphingolipids in its host. This chain is Serine palmitoyltransferase, found in Bacteroides thetaiotaomicron (strain ATCC 29148 / DSM 2079 / JCM 5827 / CCUG 10774 / NCTC 10582 / VPI-5482 / E50).